A 308-amino-acid polypeptide reads, in one-letter code: Taste receptor type 2 member 41 (308 aa).

Over 1-6 (MLSTVS) the chain is Extracellular. The helical transmembrane segment at 7-27 (VFFMSIFVLLCFLGILANGFI) threads the bilayer. At 28 to 60 (VLMLSREWLWRGRLLPSDMILLSLGTSRFCQQC) the chain is on the cytoplasmic side. Residues 61–81 (VGLVNSFYYSLHLVEYSRSLA) traverse the membrane as a helical segment. Residues 82–90 (RQLISLHMD) are Extracellular-facing. A helical transmembrane segment spans residues 91-111 (FLNSATFWFGTWLSVLFCIKI). Residues 112–128 (ANFSHPAFLWLKWRFPA) lie on the Cytoplasmic side of the membrane. Residues 129 to 149 (LVPWLLLGSILVSFIVTLMFF) form a helical membrane-spanning segment. Topologically, residues 150 to 184 (WGNHTVYQAFLRRKFSGNTTFKEWNRRLEIDYFMP) are extracellular. 2 N-linked (GlcNAc...) asparagine glycosylation sites follow: Asn152 and Asn167. The chain crosses the membrane as a helical span at residues 185 to 205 (LKLVTTSIPCSLFLVSILLLI). The Cytoplasmic segment spans residues 206–239 (NSLRRHSQRMQHNAHSLQDPNTQAHSRALKSLIS). The helical transmembrane segment at 240-260 (FLVLYALSYVSMVIDATVVIS) threads the bilayer. Residues 261–264 (SDNV) lie on the Extracellular side of the membrane. A helical membrane pass occupies residues 265 to 285 (WYWPWQIILYLCMSVHPFILI). At 286–308 (TNNLKFRGTFRQLLLLARGFWVT) the chain is on the cytoplasmic side.

Belongs to the G-protein coupled receptor T2R family. As to expression, expressed in subsets of taste receptor cells of the tongue and palate epithelium and exclusively in gustducin-positive cells. Expressed in 15% taste bud cells in circumvallate and foliate papillae but only in 2% in fungiform papillae. Expressed in the duodenum, antrum and fundus (part of the stomach).

It is found in the membrane. Receptor that may play a role in the perception of bitterness and is gustducin-linked. May play a role in sensing the chemical composition of the gastrointestinal content. The activity of this receptor may stimulate alpha gustducin, mediate PLC-beta-2 activation and lead to the gating of TRPM5. In Rattus norvegicus (Rat), this protein is Taste receptor type 2 member 41 (Tas2r41).